Here is a 416-residue protein sequence, read N- to C-terminus: Phosphoglycerate kinase (416 aa).

Substrate contacts are provided by residues 24 to 26 (DLN), R40, 63 to 66 (HLGR), R126, and R166. ATP is bound by residues K216, G304, E335, and 364 to 367 (GGDS).

Belongs to the phosphoglycerate kinase family. Monomer.

The protein localises to the cytoplasm. The catalysed reaction is (2R)-3-phosphoglycerate + ATP = (2R)-3-phospho-glyceroyl phosphate + ADP. Its pathway is carbohydrate degradation; glycolysis; pyruvate from D-glyceraldehyde 3-phosphate: step 2/5. This is Phosphoglycerate kinase from Mycobacterium leprae (strain Br4923).